Consider the following 862-residue polypeptide: DNA mismatch repair protein MutS (862 aa).

608–615 serves as a coordination point for ATP; the sequence is GPNMAGKS.

Belongs to the DNA mismatch repair MutS family.

In terms of biological role, this protein is involved in the repair of mismatches in DNA. It is possible that it carries out the mismatch recognition step. This protein has a weak ATPase activity. This Borrelia garinii subsp. bavariensis (strain ATCC BAA-2496 / DSM 23469 / PBi) (Borreliella bavariensis) protein is DNA mismatch repair protein MutS.